Reading from the N-terminus, the 46-residue chain is Aspartate aminotransferase 1 (46 aa).

It belongs to the class-I pyridoxal-phosphate-dependent aminotransferase family. Homodimer. Requires pyridoxal 5'-phosphate as cofactor.

It carries out the reaction L-aspartate + 2-oxoglutarate = oxaloacetate + L-glutamate. In terms of biological role, important for the metabolism of amino acids and Krebs-cycle related organic acids. In plants, it is involved in nitrogen metabolism and in aspects of carbon and energy metabolism. The sequence is that of Aspartate aminotransferase 1 from Pseudotsuga menziesii (Douglas-fir).